Here is a 399-residue protein sequence, read N- to C-terminus: Argininosuccinate synthase (399 aa).

Residue 9–17 (AYSGGLDTS) coordinates ATP. Tyr87 contacts L-citrulline. Gly117 contributes to the ATP binding site. L-aspartate is bound by residues Thr119, Asn123, and Asp124. Asn123 serves as a coordination point for L-citrulline. The L-citrulline site is built by Arg127, Ser176, Ser185, Glu261, and Tyr273.

This sequence belongs to the argininosuccinate synthase family. Type 1 subfamily. Homotetramer.

It is found in the cytoplasm. It carries out the reaction L-citrulline + L-aspartate + ATP = 2-(N(omega)-L-arginino)succinate + AMP + diphosphate + H(+). Its pathway is amino-acid biosynthesis; L-arginine biosynthesis; L-arginine from L-ornithine and carbamoyl phosphate: step 2/3. This is Argininosuccinate synthase from Chlorobium chlorochromatii (strain CaD3).